A 262-amino-acid polypeptide reads, in one-letter code: Acetylglutamate kinase (262 aa).

Residues 48-49, Arg70, and Asn162 contribute to the substrate site; that span reads GG.

This sequence belongs to the acetylglutamate kinase family. ArgB subfamily.

It is found in the cytoplasm. The enzyme catalyses N-acetyl-L-glutamate + ATP = N-acetyl-L-glutamyl 5-phosphate + ADP. The protein operates within amino-acid biosynthesis; L-arginine biosynthesis; N(2)-acetyl-L-ornithine from L-glutamate: step 2/4. Its function is as follows. Catalyzes the ATP-dependent phosphorylation of N-acetyl-L-glutamate. This chain is Acetylglutamate kinase, found in Vibrio cholerae serotype O1 (strain ATCC 39541 / Classical Ogawa 395 / O395).